The chain runs to 302 residues: uncharacterized protein (302 aa).

This sequence belongs to the HAD-like hydrolase superfamily.

This is an uncharacterized protein from Saccharomyces cerevisiae (strain ATCC 204508 / S288c) (Baker's yeast).